The primary structure comprises 399 residues: Tyrosine--tRNA ligase (399 aa).

The 'HIGH' region motif lies at 42–51 (PTAPDIHLGH). The short motif at 226–230 (KMSKS) is the 'KMSKS' region element. Lys-229 provides a ligand contact to ATP. Residues 337 to 398 (LTIGYILQRA…GKRRFAKVKV (62 aa)) form the S4 RNA-binding domain.

This sequence belongs to the class-I aminoacyl-tRNA synthetase family. TyrS type 2 subfamily. Homodimer.

It localises to the cytoplasm. It carries out the reaction tRNA(Tyr) + L-tyrosine + ATP = L-tyrosyl-tRNA(Tyr) + AMP + diphosphate + H(+). In terms of biological role, catalyzes the attachment of tyrosine to tRNA(Tyr) in a two-step reaction: tyrosine is first activated by ATP to form Tyr-AMP and then transferred to the acceptor end of tRNA(Tyr). The polypeptide is Tyrosine--tRNA ligase (Coxiella burnetii (strain RSA 493 / Nine Mile phase I)).